We begin with the raw amino-acid sequence, 245 residues long: 8-amino-3,8-dideoxy-manno-octulosonate cytidylyltransferase (245 aa).

The protein belongs to the KdsB family.

The protein localises to the cytoplasm. It catalyses the reaction 8-amino-3,8-dideoxy-alpha-D-manno-octulosonate + CTP = CMP-8-amino-3,8-dideoxy-alpha-D-manno-oct-2-ulosonate + diphosphate. Its pathway is bacterial outer membrane biogenesis; lipopolysaccharide biosynthesis. In terms of biological role, activates KDO8N (a required 8-carbon sugar) for incorporation into bacterial lipopolysaccharide in the Shewanella genus. The protein is 8-amino-3,8-dideoxy-manno-octulosonate cytidylyltransferase of Shewanella loihica (strain ATCC BAA-1088 / PV-4).